The following is a 335-amino-acid chain: Solute-binding protein Veis_3954 (335 aa).

A signal peptide spans 1–34 (MPSTRPLPRPSSRSLRRLALGLGLAFGLGATAAA). (R)-pantoate contacts are provided by residues Q50, E82, 155–158 (NGFR), R179, and N219.

The protein belongs to the bacterial solute-binding protein 7 family. The complex is comprised of an extracytoplasmic solute-binding protein and a heteromeric permease formed by two transmembrane proteins.

The protein localises to the periplasm. In terms of biological role, solute-binding protein that binds (R)-pantoate and D-erythronate (in vitro). Probably part of a tripartite ATP-independent periplasmic (TRAP) transport system that mediates solute transport into the cytoplasm. The chain is Solute-binding protein Veis_3954 from Verminephrobacter eiseniae (strain EF01-2).